Reading from the N-terminus, the 272-residue chain is Putative phosphoenolpyruvate synthase regulatory protein (272 aa).

Residue 152–159 (GVSRCGKT) participates in ADP binding.

Belongs to the pyruvate, phosphate/water dikinase regulatory protein family. PSRP subfamily.

The catalysed reaction is [pyruvate, water dikinase] + ADP = [pyruvate, water dikinase]-phosphate + AMP + H(+). It carries out the reaction [pyruvate, water dikinase]-phosphate + phosphate + H(+) = [pyruvate, water dikinase] + diphosphate. In terms of biological role, bifunctional serine/threonine kinase and phosphorylase involved in the regulation of the phosphoenolpyruvate synthase (PEPS) by catalyzing its phosphorylation/dephosphorylation. The polypeptide is Putative phosphoenolpyruvate synthase regulatory protein (Pseudomonas fluorescens (strain Pf0-1)).